The following is a 638-amino-acid chain: 1-deoxy-D-xylulose-5-phosphate synthase (638 aa).

Thiamine diphosphate-binding positions include histidine 79 and 120–122; that span reads AHS. Aspartate 151 provides a ligand contact to Mg(2+). Residues 152-153, asparagine 180, tyrosine 289, and glutamate 371 contribute to the thiamine diphosphate site; that span reads GA. Asparagine 180 provides a ligand contact to Mg(2+).

The protein belongs to the transketolase family. DXPS subfamily. Homodimer. Requires Mg(2+) as cofactor. The cofactor is thiamine diphosphate.

The enzyme catalyses D-glyceraldehyde 3-phosphate + pyruvate + H(+) = 1-deoxy-D-xylulose 5-phosphate + CO2. Its pathway is metabolic intermediate biosynthesis; 1-deoxy-D-xylulose 5-phosphate biosynthesis; 1-deoxy-D-xylulose 5-phosphate from D-glyceraldehyde 3-phosphate and pyruvate: step 1/1. Functionally, catalyzes the acyloin condensation reaction between C atoms 2 and 3 of pyruvate and glyceraldehyde 3-phosphate to yield 1-deoxy-D-xylulose-5-phosphate (DXP). The sequence is that of 1-deoxy-D-xylulose-5-phosphate synthase from Rhizobium johnstonii (strain DSM 114642 / LMG 32736 / 3841) (Rhizobium leguminosarum bv. viciae).